The sequence spans 552 residues: Acyl-CoA-dependent acyltransferase MAC1 (552 aa).

It belongs to the trichothecene O-acetyltransferase family.

Its pathway is secondary metabolite biosynthesis. Acyl-CoA-dependent acyltransferase; part of the gene cluster that mediates the biosynthesis of mannosylerythritol lipids (MELs), surface-active substances that enhance the availability of water-insoluble substrates. Depending on the number of acetyl groups, mannosylerythritol lipids can be differentiated into MEL A (fully acetylated), MEL B and MEL C (monoacetylated at R-6 and R-4, respectively), and the fully deacetylated MEL D. The first step in the pathway is the generation of mannosylerythritol by the glycosyltransferase EMT1 which catalyzes the transfer of GDP-mannose to the C-4 atom of meso-erythritol. This reaction has to be stereospecific, since only mannosyl-D-erythritol is generated. The produced disaccharide is subsequently acylated with fatty acids of various lengths by the acyltransferases MAC1 and MAC2 at positions C-2 and C-3, repectively. The existence of MEL derivatives which carry an acetyl group at C-2 implies that at least MAC1 also accepts acetyl-CoA as a donor. The final step of MEL biosynthesis is the acetylation of the fully acylated mannosylerythritol lipids catalyzed by the acetyl-CoA-dependent acetyltransferase MAT1. MAT1 displays a relaxed regioselectivity and is able to transfer acetylgroups to both positions C-4 and C-6 of the mannosyl moiety. The chain is Acyl-CoA-dependent acyltransferase MAC1 from Pseudozyma antarctica (strain T-34) (Yeast).